The sequence spans 102 residues: Small ribosomal subunit protein uS10 (102 aa).

The protein belongs to the universal ribosomal protein uS10 family. As to quaternary structure, part of the 30S ribosomal subunit.

Involved in the binding of tRNA to the ribosomes. The chain is Small ribosomal subunit protein uS10 from Acidothermus cellulolyticus (strain ATCC 43068 / DSM 8971 / 11B).